The chain runs to 259 residues: Deoxyribose-phosphate aldolase (259 aa).

The active-site Proton donor/acceptor is the aspartate 102. The Schiff-base intermediate with acetaldehyde role is filled by lysine 167. Lysine 201 serves as the catalytic Proton donor/acceptor.

This sequence belongs to the DeoC/FbaB aldolase family. DeoC type 2 subfamily.

Its subcellular location is the cytoplasm. It carries out the reaction 2-deoxy-D-ribose 5-phosphate = D-glyceraldehyde 3-phosphate + acetaldehyde. The protein operates within carbohydrate degradation; 2-deoxy-D-ribose 1-phosphate degradation; D-glyceraldehyde 3-phosphate and acetaldehyde from 2-deoxy-alpha-D-ribose 1-phosphate: step 2/2. Functionally, catalyzes a reversible aldol reaction between acetaldehyde and D-glyceraldehyde 3-phosphate to generate 2-deoxy-D-ribose 5-phosphate. This chain is Deoxyribose-phosphate aldolase, found in Klebsiella pneumoniae (strain 342).